A 1315-amino-acid polypeptide reads, in one-letter code: DNA-directed RNA polymerase subunit beta' (1315 aa).

Zn(2+) is bound by residues Cys-60, Cys-62, Cys-75, and Cys-78. Mg(2+) is bound by residues Asp-535, Asp-537, and Asp-539. Residues Cys-890, Cys-967, Cys-974, and Cys-977 each coordinate Zn(2+).

The protein belongs to the RNA polymerase beta' chain family. The RNAP catalytic core consists of 2 alpha, 1 beta, 1 beta' and 1 omega subunit. When a sigma factor is associated with the core the holoenzyme is formed, which can initiate transcription. Requires Mg(2+) as cofactor. The cofactor is Zn(2+).

It catalyses the reaction RNA(n) + a ribonucleoside 5'-triphosphate = RNA(n+1) + diphosphate. Its function is as follows. DNA-dependent RNA polymerase catalyzes the transcription of DNA into RNA using the four ribonucleoside triphosphates as substrates. The protein is DNA-directed RNA polymerase subunit beta' of Mycobacterium sp. (strain MCS).